A 579-amino-acid chain; its full sequence is Acyl-coenzyme A synthetase ACSM5, mitochondrial (579 aa).

The N-terminal 26 residues, 1–26 (MRPWLRHLVLQALRNSRAFCGSHGKP), are a transit peptide targeting the mitochondrion. Lys-97 carries the N6-acetyllysine; alternate modification. Lys-97 is modified (N6-succinyllysine; alternate). At Lys-152 the chain carries N6-acetyllysine. 230–238 (TSGTTGAPK) serves as a coordination point for ATP. Lys-303 is subject to N6-acetyllysine; alternate. Lys-303 bears the N6-succinyllysine; alternate mark. ATP contacts are provided by residues 368-373 (EGYGQS), Asp-455, Arg-470, and Lys-566.

The protein belongs to the ATP-dependent AMP-binding enzyme family. Mg(2+) serves as cofactor. The cofactor is Mn(2+). As to expression, detected in kidney and liver.

The protein resides in the mitochondrion matrix. It catalyses the reaction a medium-chain fatty acid + ATP + CoA = a medium-chain fatty acyl-CoA + AMP + diphosphate. In terms of biological role, catalyzes the activation of fatty acids by CoA to produce an acyl-CoA, the first step in fatty acid metabolism. The chain is Acyl-coenzyme A synthetase ACSM5, mitochondrial (ACSM5) from Homo sapiens (Human).